Reading from the N-terminus, the 552-residue chain is Leucine-rich repeat-containing protein 31 (552 aa).

Residues 1–65 form a disordered region; sequence MSQTRKKTSS…SETAKPLSSE (65 aa). Residues 31–41 are compositionally biased toward basic and acidic residues; the sequence is ESRKEDNDLKT. The segment covering 42–58 has biased composition (polar residues); the sequence is SDSQPSDWIQKTATSET. LRR repeat units lie at residues 227 to 246, 255 to 275, 283 to 293, 311 to 331, 339 to 360, 367 to 387, 395 to 415, 423 to 443, and 453 to 475; these read SLEV…LNSI, NLKV…KILD, ELRKLDLSCNK, HLQV…MSLT, NLQE…NLLS, ALKS…TALA, ALEV…KLLL, SLQV…ALLA, and KLQK…MFCQ.

In Homo sapiens (Human), this protein is Leucine-rich repeat-containing protein 31 (LRRC31).